The sequence spans 86 residues: Small ribosomal subunit protein uS15c (86 aa).

The protein belongs to the universal ribosomal protein uS15 family. In terms of assembly, part of the 30S ribosomal subunit.

Its subcellular location is the plastid. The protein localises to the chloroplast. The polypeptide is Small ribosomal subunit protein uS15c (rps15) (Cryptomeria japonica (Japanese cedar)).